A 130-amino-acid chain; its full sequence is Small ribosomal subunit protein uS11 (130 aa).

Residues 1-15 (MARPTKKSGPRKQKR) show a composition bias toward basic residues. A disordered region spans residues 1-21 (MARPTKKSGPRKQKRNVPSGV).

Belongs to the universal ribosomal protein uS11 family. In terms of assembly, part of the 30S ribosomal subunit. Interacts with proteins S7 and S18. Binds to IF-3.

Functionally, located on the platform of the 30S subunit, it bridges several disparate RNA helices of the 16S rRNA. Forms part of the Shine-Dalgarno cleft in the 70S ribosome. The protein is Small ribosomal subunit protein uS11 of Synechococcus elongatus (strain ATCC 33912 / PCC 7942 / FACHB-805) (Anacystis nidulans R2).